Consider the following 352-residue polypeptide: Secreted RxLR effector protein 122 (352 aa).

The signal sequence occupies residues 1–21 (MRGAYYVLIALLVVASSQTSA). Positions 48–65 (QFLRGSRNVPGDLAHEER) match the RxLR-dEER motif. Over residues 280 to 290 (RGGTTGASRGT) the composition is skewed to low complexity. Residues 280–352 (RGGTTGASRG…VEPEGHRSKP (73 aa)) are disordered. Positions 302 to 315 (AASTSKGKSSVFTE) are enriched in polar residues.

The protein belongs to the RxLR effector family.

The protein resides in the secreted. It is found in the host nucleus. Functionally, secreted effector that acts as an elicitor that induces cell death in host plant cells. The polypeptide is Secreted RxLR effector protein 122 (Plasmopara viticola (Downy mildew of grapevine)).